The primary structure comprises 391 residues: Mycofactocin maturase MftC (391 aa).

A Radical SAM core domain is found at 16–232; it reads LDAPICLTWE…KGERVLTGDS (217 aa). Cys30, Cys34, Cys37, Cys251, Cys258, Cys269, Cys310, Cys313, Cys319, Cys323, and Cys341 together coordinate [4Fe-4S] cluster. The segment at 340 to 391 is disordered; it reads ECVQGHSEPALARERHLPRPRADHSRGRRVSKPVPLTLSMRPPKRPCNESPV. Positions 350–364 are enriched in basic and acidic residues; the sequence is LARERHLPRPRADHS.

This sequence belongs to the radical SAM superfamily. It depends on [4Fe-4S] cluster as a cofactor.

The catalysed reaction is [mycofactocin precursor peptide]-C-terminal glycyl-L-valyl-L-tyrosine + S-adenosyl-L-methionine = [mycofactocin precursor peptide]-C-terminal glycyl-N-{[2-(4-hydroxyphenyl)ethenyl]-3-methylbutanamide} + 5'-deoxyadenosine + L-methionine + CO2. It catalyses the reaction [mycofactocin precursor peptide]-C-terminal glycyl-N-{[2-(4-hydroxyphenyl)ethenyl]-3-methylbutanamide} + AH2 + S-adenosyl-L-methionine = [mycofactocin precursor peptide]-C-terminal glycyl-N-{5-[(4-hydroxyphenyl)methyl]-4,4-dimethyl-2-oxopyrrolidin-3-yl}acetamide + 5'-deoxyadenosine + L-methionine + A + H(+). Functionally, radical S-adenosylmethionine (SAM) enzyme responsible for the first step of the biosynthesis of the enzyme cofactor mycofactocin (MFT). Catalyzes two reactions at the C-terminus of the mycofactocin precursor (the MftA peptide). The first one is the oxidative decarboxylation of the C-terminal L-tyrosine of MftA, forming an unsaturated tyramine moiety. The second reaction is the cross-linking of the tyramine with the penultimate L-valine residue, forming a five-membered lactam ring. Its activity requires the presence of the MftB chaperone. This is Mycofactocin maturase MftC (mftC) from Mycobacterium tuberculosis (strain CDC 1551 / Oshkosh).